The primary structure comprises 200 residues: NADH-quinone oxidoreductase subunit C (200 aa).

The protein belongs to the complex I 30 kDa subunit family. In terms of assembly, NDH-1 is composed of 14 different subunits. Subunits NuoB, C, D, E, F, and G constitute the peripheral sector of the complex.

It localises to the cell inner membrane. The catalysed reaction is a quinone + NADH + 5 H(+)(in) = a quinol + NAD(+) + 4 H(+)(out). Functionally, NDH-1 shuttles electrons from NADH, via FMN and iron-sulfur (Fe-S) centers, to quinones in the respiratory chain. The immediate electron acceptor for the enzyme in this species is believed to be ubiquinone. Couples the redox reaction to proton translocation (for every two electrons transferred, four hydrogen ions are translocated across the cytoplasmic membrane), and thus conserves the redox energy in a proton gradient. This is NADH-quinone oxidoreductase subunit C from Burkholderia cenocepacia (strain HI2424).